The chain runs to 486 residues: MKRLKINYILIGVVTLLLALALWPNITWRGGQGGQLEEIKSRGELRISTLNSPLTYFTTKQGPSGLDYELAKRFANYLGVKLVVIPHKNINDLFDDLDDDDADLLAAGLIYNQDRLSRARTGPAYYSVSQQLVYRLGTARPKTFADIKGKLAVASGSAHVSTLKQLKQSKFPDLSWEASSDLTSKELLEQVADGKLDYTLGDSVTIALLQRIHPQLAVAFDVTDEEPVTWYLKRGTDDSLYAAMLDFYSQMVDDGTLARLEEKYLGHVGSFDYVDTKTFLSAIDSVLPTFRSLFEKYASEIDWKLLAAIAYQESHWNPQATSPTGVRGLMMLTRATADGLGVNDRLDPEESIQGGALYLQRLMAKVPDSVPEDERIWFSLAAYNMGWGHMLDARKLTKMQKGNPDSWVDVKQRLPMLSQKRYYPQLTYGYARGREAYNYVENIRRYQVSLVGYLQEKERKAAQEAAEQADQGKGYPAVTPELALNF.

The signal sequence occupies residues 1 to 21 (MKRLKINYILIGVVTLLLALA). The segment at 22–268 (LWPNITWRGG…RLEEKYLGHV (247 aa)) is non-LT domain. The segment at 269 to 486 (GSFDYVDTKT…AVTPELALNF (218 aa)) is LT domain. Residue Glu313 is part of the active site.

In the N-terminal section; belongs to the bacterial solute-binding protein 3 family. It in the C-terminal section; belongs to the transglycosylase Slt family.

The protein localises to the cell outer membrane. The enzyme catalyses Exolytic cleavage of the (1-&gt;4)-beta-glycosidic linkage between N-acetylmuramic acid (MurNAc) and N-acetylglucosamine (GlcNAc) residues in peptidoglycan, from either the reducing or the non-reducing ends of the peptidoglycan chains, with concomitant formation of a 1,6-anhydrobond in the MurNAc residue.. In terms of biological role, murein-degrading enzyme that degrades murein glycan strands and insoluble, high-molecular weight murein sacculi, with the concomitant formation of a 1,6-anhydromuramoyl product. Lytic transglycosylases (LTs) play an integral role in the metabolism of the peptidoglycan (PG) sacculus. Their lytic action creates space within the PG sacculus to allow for its expansion as well as for the insertion of various structures such as secretion systems and flagella. In Serratia proteamaculans (strain 568), this protein is Membrane-bound lytic murein transglycosylase F.